A 289-amino-acid polypeptide reads, in one-letter code: ATP synthase gamma chain (289 aa).

Belongs to the ATPase gamma chain family. As to quaternary structure, F-type ATPases have 2 components, CF(1) - the catalytic core - and CF(0) - the membrane proton channel. CF(1) has five subunits: alpha(3), beta(3), gamma(1), delta(1), epsilon(1). CF(0) has three main subunits: a, b and c.

It localises to the cell membrane. In terms of biological role, produces ATP from ADP in the presence of a proton gradient across the membrane. The gamma chain is believed to be important in regulating ATPase activity and the flow of protons through the CF(0) complex. The protein is ATP synthase gamma chain of Lactococcus lactis subsp. cremoris (strain MG1363).